A 64-amino-acid polypeptide reads, in one-letter code: UPF0434 protein TERTU_2813 (64 aa).

This sequence belongs to the UPF0434 family.

In Teredinibacter turnerae (strain ATCC 39867 / T7901), this protein is UPF0434 protein TERTU_2813.